The primary structure comprises 178 residues: Ribosome maturation factor RimM (178 aa).

A PRC barrel domain is found at 95–174 (EGQHFWFNVI…IVHVKDAKDI (80 aa)).

The protein belongs to the RimM family. As to quaternary structure, binds ribosomal protein uS19.

The protein resides in the cytoplasm. Functionally, an accessory protein needed during the final step in the assembly of 30S ribosomal subunit, possibly for assembly of the head region. Essential for efficient processing of 16S rRNA. May be needed both before and after RbfA during the maturation of 16S rRNA. It has affinity for free ribosomal 30S subunits but not for 70S ribosomes. The polypeptide is Ribosome maturation factor RimM (Sulfurovum sp. (strain NBC37-1)).